The sequence spans 183 residues: Cuticle protein 2 (183 aa).

A signal peptide spans 1–15 (MKLIVVAALIGVCAG). Positions 58 to 121 (SQGFQYVYDT…AQGAHLPTPP (64 aa)) constitute a Chitin-binding type R&amp;R domain.

This Lonomia obliqua (Moth) protein is Cuticle protein 2.